The sequence spans 263 residues: MKERFIKKTHYLDYQFDEHTDIKLGFTTRENGLSPYPNHSFNMARYISDSAHHITHHQDILANLIGYPRDEWVFPIQTHDNRIVEVTSEHKGTNIDKLTDDLHGIDGMYTFDSHILLTMCYADCVPVYFYSESHGYIGLAHAGWRGTYGQIVKEMLKKVDFDYEDLKIVIGPATSNSYEINDDIKNKFEELTIDSTLYIESRGKNKHGIDLKKANALLLEEAGVPSKNIYITEYSTSENLDLFFSYRVEKGQTGRMLAFIGRK.

Zn(2+) contacts are provided by histidine 79, cysteine 124, and histidine 141.

This sequence belongs to the purine nucleoside phosphorylase YfiH/LACC1 family. In terms of assembly, homodimer. The cofactor is Cu(2+). Zn(2+) is required as a cofactor.

The enzyme catalyses adenosine + phosphate = alpha-D-ribose 1-phosphate + adenine. It carries out the reaction S-methyl-5'-thioadenosine + phosphate = 5-(methylsulfanyl)-alpha-D-ribose 1-phosphate + adenine. The catalysed reaction is inosine + phosphate = alpha-D-ribose 1-phosphate + hypoxanthine. It catalyses the reaction adenosine + H2O + H(+) = inosine + NH4(+). Purine nucleoside enzyme that catalyzes the phosphorolysis of adenosine and inosine nucleosides, yielding D-ribose 1-phosphate and the respective free bases, adenine and hypoxanthine. Also catalyzes the phosphorolysis of S-methyl-5'-thioadenosine into adenine and S-methyl-5-thio-alpha-D-ribose 1-phosphate. Also has adenosine deaminase activity. This Staphylococcus epidermidis (strain ATCC 35984 / DSM 28319 / BCRC 17069 / CCUG 31568 / BM 3577 / RP62A) protein is Purine nucleoside phosphorylase SERP0752.